The sequence spans 623 residues: DNA-directed RNA polymerase subunit gamma (623 aa).

Zn(2+)-binding residues include C70, C72, C85, and C88. Mg(2+) is bound by residues D466, D468, and D470.

Belongs to the RNA polymerase beta' chain family. RpoC1 subfamily. In cyanobacteria the RNAP catalytic core is composed of 2 alpha, 1 beta, 1 beta', 1 gamma and 1 omega subunit. When a sigma factor is associated with the core the holoenzyme is formed, which can initiate transcription. Requires Mg(2+) as cofactor. It depends on Zn(2+) as a cofactor.

The enzyme catalyses RNA(n) + a ribonucleoside 5'-triphosphate = RNA(n+1) + diphosphate. DNA-dependent RNA polymerase catalyzes the transcription of DNA into RNA using the four ribonucleoside triphosphates as substrates. This is DNA-directed RNA polymerase subunit gamma from Acaryochloris marina (strain MBIC 11017).